The chain runs to 121 residues: Fluoride-specific ion channel FluC 3 (121 aa).

A run of 4 helical transmembrane segments spans residues 3–23, 40–60, 69–89, and 101–121; these read VFLP…RYLL, FTIN…ALGG, VLAT…NEMV, and AAYL…GFLV. Na(+)-binding residues include glycine 76 and serine 79.

It belongs to the fluoride channel Fluc/FEX (TC 1.A.43) family.

The protein resides in the cell membrane. The catalysed reaction is fluoride(in) = fluoride(out). Na(+) is not transported, but it plays an essential structural role and its presence is essential for fluoride channel function. Its function is as follows. Fluoride-specific ion channel. Important for reducing fluoride concentration in the cell, thus reducing its toxicity. The protein is Fluoride-specific ion channel FluC 3 of Bifidobacterium longum (strain NCC 2705).